The following is a 183-amino-acid chain: Adenine phosphoribosyltransferase (183 aa).

The protein belongs to the purine/pyrimidine phosphoribosyltransferase family. As to quaternary structure, homodimer.

It localises to the cytoplasm. The enzyme catalyses AMP + diphosphate = 5-phospho-alpha-D-ribose 1-diphosphate + adenine. It participates in purine metabolism; AMP biosynthesis via salvage pathway; AMP from adenine: step 1/1. In terms of biological role, catalyzes a salvage reaction resulting in the formation of AMP, that is energically less costly than de novo synthesis. The sequence is that of Adenine phosphoribosyltransferase from Photorhabdus laumondii subsp. laumondii (strain DSM 15139 / CIP 105565 / TT01) (Photorhabdus luminescens subsp. laumondii).